Here is a 158-residue protein sequence, read N- to C-terminus: Small ribosomal subunit protein uS15 (158 aa).

Residues 1 to 18 (MARMHARKRGKSGSKRPP) are compositionally biased toward basic residues. Residues 1-21 (MARMHARKRGKSGSKRPPRTA) are disordered.

It belongs to the universal ribosomal protein uS15 family. In terms of assembly, part of the 30S ribosomal subunit.

This chain is Small ribosomal subunit protein uS15, found in Pyrococcus abyssi (strain GE5 / Orsay).